Here is a 482-residue protein sequence, read N- to C-terminus: ATP synthase subunit beta (482 aa).

An ATP-binding site is contributed by 168–175 (GGAGVGKT).

This sequence belongs to the ATPase alpha/beta chains family. F-type ATPases have 2 components, CF(1) - the catalytic core - and CF(0) - the membrane proton channel. CF(1) has five subunits: alpha(3), beta(3), gamma(1), delta(1), epsilon(1). CF(0) has three main subunits: a(1), b(2) and c(9-12). The alpha and beta chains form an alternating ring which encloses part of the gamma chain. CF(1) is attached to CF(0) by a central stalk formed by the gamma and epsilon chains, while a peripheral stalk is formed by the delta and b chains.

It localises to the cell membrane. The enzyme catalyses ATP + H2O + 4 H(+)(in) = ADP + phosphate + 5 H(+)(out). Its function is as follows. Produces ATP from ADP in the presence of a proton gradient across the membrane. The catalytic sites are hosted primarily by the beta subunits. This is ATP synthase subunit beta from Corynebacterium urealyticum (strain ATCC 43042 / DSM 7109).